The chain runs to 391 residues: L-tryptophan--pyruvate aminotransferase 1 (391 aa).

Pyridoxal 5'-phosphate-binding positions include Tyr58, 100–101 (ST), Asn168, 191–194 (DFAY), 214–217 (TFSK), and Arg225. Lys217 is subject to N6-(pyridoxal phosphate)lysine.

This sequence belongs to the alliinase family. Requires pyridoxal 5'-phosphate as cofactor. Expressed at the leaf margin and in the vasculature of emerging young leaves. Expressed in the quiescent center and in the vasculature of root tips. Detected in the shoot apical meristem, stems, sepals, stamen filaments, the shoot and root junction, the stigma and the base of the silique.

It is found in the cytoplasm. The enzyme catalyses L-tryptophan + 2-oxoglutarate = indole-3-pyruvate + L-glutamate. The catalysed reaction is L-tryptophan + pyruvate = indole-3-pyruvate + L-alanine. It participates in plant hormone metabolism; auxin biosynthesis. With respect to regulation, inhibited by L-kynurenine. Functionally, L-tryptophan aminotransferase involved in auxin (IAA) biosynthesis. Can convert L-tryptophan and pyruvate to indole-3-pyruvic acid (IPA) and alanine. Catalyzes the first step in IPA branch of the auxin biosynthetic pathway. Required for auxin production to initiate multiple change in growth in response to environmental and developmental cues. It is also active with phenylalanine, tyrosine, leucine, alanine, methionine and glutamine. Both TAA1 and TAR2 are required for maintaining proper auxin levels in roots, while TAA1, TAR1 and TAR2 are required for proper embryo patterning. Involved in the maintenance of the root stem cell niches and required for shade avoidance. The chain is L-tryptophan--pyruvate aminotransferase 1 (TAA1) from Arabidopsis thaliana (Mouse-ear cress).